We begin with the raw amino-acid sequence, 201 residues long: Large ribosomal subunit protein uL4 (201 aa).

The tract at residues 44–68 is disordered; sequence KAQKTRSEVAGTTKKSKKQKGGGAR.

This sequence belongs to the universal ribosomal protein uL4 family. In terms of assembly, part of the 50S ribosomal subunit.

In terms of biological role, one of the primary rRNA binding proteins, this protein initially binds near the 5'-end of the 23S rRNA. It is important during the early stages of 50S assembly. It makes multiple contacts with different domains of the 23S rRNA in the assembled 50S subunit and ribosome. Its function is as follows. Forms part of the polypeptide exit tunnel. This Xanthomonas campestris pv. campestris (strain 8004) protein is Large ribosomal subunit protein uL4.